Reading from the N-terminus, the 279-residue chain is HTH-type transcriptional regulator HdfR (279 aa).

The 58-residue stretch at 1-58 folds into the HTH lysR-type domain; the sequence is MDTELLKTFLEVSRTRHFGRAAESLYLTQSAVSFRIRQLENQLGVNLFTRHRNNIRLT. Positions 18 to 37 form a DNA-binding region, H-T-H motif; sequence FGRAAESLYLTQSAVSFRIR.

The protein belongs to the LysR transcriptional regulatory family.

Its function is as follows. Negatively regulates the transcription of the flagellar master operon flhDC by binding to the upstream region of the operon. The protein is HTH-type transcriptional regulator HdfR of Escherichia coli O17:K52:H18 (strain UMN026 / ExPEC).